The following is a 284-amino-acid chain: 4-diphosphocytidyl-2-C-methyl-D-erythritol kinase (284 aa).

The active site involves Lys14. Pro98–Ser108 is a binding site for ATP. Residue Asp140 is part of the active site.

This sequence belongs to the GHMP kinase family. IspE subfamily.

The enzyme catalyses 4-CDP-2-C-methyl-D-erythritol + ATP = 4-CDP-2-C-methyl-D-erythritol 2-phosphate + ADP + H(+). The protein operates within isoprenoid biosynthesis; isopentenyl diphosphate biosynthesis via DXP pathway; isopentenyl diphosphate from 1-deoxy-D-xylulose 5-phosphate: step 3/6. In terms of biological role, catalyzes the phosphorylation of the position 2 hydroxy group of 4-diphosphocytidyl-2C-methyl-D-erythritol. This is 4-diphosphocytidyl-2-C-methyl-D-erythritol kinase from Shewanella woodyi (strain ATCC 51908 / MS32).